We begin with the raw amino-acid sequence, 341 residues long: Elongation factor Ts (341 aa).

The segment at 80–83 (TDFV) is involved in Mg(2+) ion dislocation from EF-Tu.

The protein belongs to the EF-Ts family.

Its subcellular location is the cytoplasm. Associates with the EF-Tu.GDP complex and induces the exchange of GDP to GTP. It remains bound to the aminoacyl-tRNA.EF-Tu.GTP complex up to the GTP hydrolysis stage on the ribosome. The chain is Elongation factor Ts from Lactobacillus helveticus (strain DPC 4571).